A 78-amino-acid chain; its full sequence is MSNIEQQVKKIIAEQLGVNEADVKNESSFQDDLGADSLDTVELVMALEEAFGCEIPDEDAEKITTVQLAIDYINAHNG.

The Carrier domain maps to 2–77 (SNIEQQVKKI…LAIDYINAHN (76 aa)). Position 37 is an O-(pantetheine 4'-phosphoryl)serine (S37).

Belongs to the acyl carrier protein (ACP) family. 4'-phosphopantetheine is transferred from CoA to a specific serine of apo-ACP by AcpS. This modification is essential for activity because fatty acids are bound in thioester linkage to the sulfhydryl of the prosthetic group.

It localises to the cytoplasm. The protein operates within lipid metabolism; fatty acid biosynthesis. Its function is as follows. Carrier of the growing fatty acid chain in fatty acid biosynthesis. This Neisseria gonorrhoeae (strain ATCC 700825 / FA 1090) protein is Acyl carrier protein.